The sequence spans 833 residues: Heat shock transcription factor (833 aa).

Met1 is subject to N-acetylmethionine. Positions 1–16 (MNNAANTGTTNESNVS) are enriched in polar residues. 2 disordered regions span residues 1–31 (MNNA…NDDD) and 62–92 (NPSL…STHL). Residues 69–80 (SAASPVPSSSFF) are compositionally biased toward low complexity. Residue Thr97 is modified to Phosphothreonine. The segment covering 150-161 (PSSGTTNAQPRQ) has biased composition (polar residues). Disordered regions lie at residues 150–170 (PSSG…QSHK) and 277–309 (GSSN…NNSN). A DNA-binding region spans residues 170-259 (KSRPAFVNKL…SDDKWQFENE (90 aa)). The segment at 260–280 (NFIRGREDLLEKIIRQKGSSN) is flexible linker. Low complexity predominate over residues 277–296 (GSSNNHNSPSGNGNPANGSN). Positions 350–403 (ELEQIKYNQIAISKDLLRINKDNELLWQENMMARERHRTQQQALEKMFRFLTSI) are involved in trimerization. The segment covering 447-457 (SNDSFINDDRN) has biased composition (basic and acidic residues). The segment at 447 to 493 (SNDSFINDDRNSFTNATTNARNNMSPNNDDNSIDTASTNTTNRKKNI) is disordered. Phosphoserine occurs at positions 450, 458, 471, 478, and 528. Over residues 458-487 (SFTNATTNARNNMSPNNDDNSIDTASTNTT) the composition is skewed to polar residues. Residues 542-554 (RANSSTSSENPSL) are compositionally biased toward polar residues. 3 disordered regions span residues 542 to 626 (RANS…HNES), 657 to 765 (GYPN…RVSP), and 778 to 799 (SDNL…APEN). Residues 571 to 580 (PFDDEEEEET) show a composition bias toward acidic residues. Positions 588-600 (RDPNNQTSENTFD) are enriched in polar residues. The segment covering 610–626 (DDLKKDSHTNDNKHNES) has biased composition (basic and acidic residues). Residues 660–675 (NKSFNNKTSSTNTNSN) are compositionally biased toward low complexity. Residues 676–687 (MESAVNVNSPGF) are compositionally biased toward polar residues. A compositionally biased stretch (low complexity) spans 697–713 (SNSPNSVHSVPSNGSGS). Composition is skewed to polar residues over residues 727-739 (ASTS…NGSG), 752-763 (NDNNTSEGSTRV), and 778-794 (SDNL…TQAD).

This sequence belongs to the HSF family. In terms of assembly, homotrimer. Homotrimerization increases the affinity of HSF1 to DNA. In terms of processing, exhibits temperature-dependent phosphorylation that activates the transcriptional capacity.

The protein localises to the nucleus. In terms of biological role, DNA-binding transcription factor that specifically binds heat shock promoter elements (HSE) and activates transcription. The polypeptide is Heat shock transcription factor (Saccharomyces cerevisiae (strain ATCC 204508 / S288c) (Baker's yeast)).